Here is a 97-residue protein sequence, read N- to C-terminus: Phosphoribosyl-ATP pyrophosphatase (97 aa).

The protein belongs to the PRA-PH family.

Its subcellular location is the cytoplasm. The enzyme catalyses 1-(5-phospho-beta-D-ribosyl)-ATP + H2O = 1-(5-phospho-beta-D-ribosyl)-5'-AMP + diphosphate + H(+). It functions in the pathway amino-acid biosynthesis; L-histidine biosynthesis; L-histidine from 5-phospho-alpha-D-ribose 1-diphosphate: step 2/9. The protein is Phosphoribosyl-ATP pyrophosphatase of Methanoculleus marisnigri (strain ATCC 35101 / DSM 1498 / JR1).